The primary structure comprises 582 residues: DNA mismatch repair protein MutL (582 aa).

The protein belongs to the DNA mismatch repair MutL/HexB family.

In terms of biological role, this protein is involved in the repair of mismatches in DNA. It is required for dam-dependent methyl-directed DNA mismatch repair. May act as a 'molecular matchmaker', a protein that promotes the formation of a stable complex between two or more DNA-binding proteins in an ATP-dependent manner without itself being part of a final effector complex. The protein is DNA mismatch repair protein MutL of Chlamydia abortus (strain DSM 27085 / S26/3) (Chlamydophila abortus).